The following is a 438-amino-acid chain: 3-phosphoshikimate 1-carboxyvinyltransferase (438 aa).

3-phosphoshikimate-binding residues include K21, S22, and R26. K21 provides a ligand contact to phosphoenolpyruvate. Phosphoenolpyruvate is bound by residues G95 and R123. Residues S167, Q169, D315, and K342 each coordinate 3-phosphoshikimate. Q169 provides a ligand contact to phosphoenolpyruvate. D315 serves as the catalytic Proton acceptor. Residues R346 and R387 each contribute to the phosphoenolpyruvate site.

The protein belongs to the EPSP synthase family. Monomer.

The protein resides in the cytoplasm. It catalyses the reaction 3-phosphoshikimate + phosphoenolpyruvate = 5-O-(1-carboxyvinyl)-3-phosphoshikimate + phosphate. It functions in the pathway metabolic intermediate biosynthesis; chorismate biosynthesis; chorismate from D-erythrose 4-phosphate and phosphoenolpyruvate: step 6/7. In terms of biological role, catalyzes the transfer of the enolpyruvyl moiety of phosphoenolpyruvate (PEP) to the 5-hydroxyl of shikimate-3-phosphate (S3P) to produce enolpyruvyl shikimate-3-phosphate and inorganic phosphate. This chain is 3-phosphoshikimate 1-carboxyvinyltransferase, found in Coxiella burnetii (strain CbuG_Q212) (Coxiella burnetii (strain Q212)).